The primary structure comprises 763 residues: DNA-binding protein SATB1 (763 aa).

Positions methionine 1–glutamate 15 are enriched in basic and acidic residues. Residues methionine 1–glycine 54 form a disordered region. Residues valine 20–leucine 40 carry the Nuclear localization signal motif. A Glycyl lysine isopeptide (Lys-Gly) (interchain with G-Cter in SUMO2) cross-link involves residue lysine 51. Positions glycine 71–serine 172 constitute a CMP domain. N6-acetyllysine is present on lysine 136. The Protein interaction motif lies at proline 139 to serine 143. In terms of domain architecture, CUTL spans lysine 175–aspartate 248. Serine 185 is modified (phosphoserine). A nuclear matrix targeting sequence (NMTS) region spans residues tyrosine 224 to threonine 278. Polar residues predominate over residues histidine 266–valine 296. The disordered stretch occupies residues histidine 266–leucine 307. 2 consecutive DNA-binding regions (CUT) follow at residues leucine 361 to arginine 448 and asparagine 484 to serine 571. DNA is bound by residues glutamine 390, arginine 400 to arginine 410, and asparagine 425. A compositionally biased stretch (low complexity) spans glutamine 591 to glutamine 607. Positions glutamine 591–threonine 649 are disordered. Serine 637 is modified (phosphoserine). A DNA-binding region (homeobox) is located at residues threonine 645–glycine 704. Lysine 744 participates in a covalent cross-link: Glycyl lysine isopeptide (Lys-Gly) (interchain with G-Cter in SUMO).

Belongs to the CUT homeobox family. In terms of assembly, interacts with CUX1 (via DNA-binding domains); the interaction inhibits the attachment of both proteins to DNA. Homodimer. Part of the nuclear protein complex gamma-globin promoter and enhancer binding factor (gamma-PE) composed at least of SATB1 and HOXB2. Interaction with CtBP1 when not acetylated stabilizes attachment to DNA and promotes transcription repression. Interacts with PCAF. Interacts with sumoylated PML and HDAC1 via the CMP domain. Interacts also with DYNLT3 and POLR2J2. Binds to EP300. As to quaternary structure, (Microbial infection) Interacts (via the CMP domain) with HIV-1 Tat. Post-translationally, sumoylated. Sumoylation promotes cleavage by caspases. Phosphorylated by PKC. Acetylated by PCAF. Phosphorylated form interacts with HDAC1, but unphosphorylated form interacts with PCAF. DNA binding properties are activated by phosphorylation and inactivated by acetylation. In opposition, gene expression is down-regulated by phosphorylation but up-regulated by acetylation. In terms of processing, cleaved at Asp-254 by caspase-3 and caspase-6 during T-cell apoptosis in thymus and during B-cell stimulation. The cleaved forms cannot dimerize and lose transcription regulation function because of impaired DNA and chromatin association. As to expression, expressed predominantly in thymus.

The protein resides in the nucleus matrix. Its subcellular location is the nucleus. The protein localises to the PML body. Functionally, crucial silencing factor contributing to the initiation of X inactivation mediated by Xist RNA that occurs during embryogenesis and in lymphoma. Binds to DNA at special AT-rich sequences, the consensus SATB1-binding sequence (CSBS), at nuclear matrix- or scaffold-associated regions. Thought to recognize the sugar-phosphate structure of double-stranded DNA. Transcriptional repressor controlling nuclear and viral gene expression in a phosphorylated and acetylated status-dependent manner, by binding to matrix attachment regions (MARs) of DNA and inducing a local chromatin-loop remodeling. Acts as a docking site for several chromatin remodeling enzymes (e.g. PML at the MHC-I locus) and also by recruiting corepressors (HDACs) or coactivators (HATs) directly to promoters and enhancers. Modulates genes that are essential in the maturation of the immune T-cell CD8SP from thymocytes. Required for the switching of fetal globin species, and beta- and gamma-globin genes regulation during erythroid differentiation. Plays a role in chromatin organization and nuclear architecture during apoptosis. Interacts with the unique region (UR) of cytomegalovirus (CMV). Alu-like motifs and SATB1-binding sites provide a unique chromatin context which seems preferentially targeted by the HIV-1 integration machinery. Moreover, HIV-1 Tat may overcome SATB1-mediated repression of IL2 and IL2RA (interleukin) in T-cells by binding to the same domain than HDAC1. Delineates specific epigenetic modifications at target gene loci, directly up-regulating metastasis-associated genes while down-regulating tumor-suppressor genes. Reprograms chromatin organization and the transcription profiles of breast tumors to promote growth and metastasis. Promotes neuronal differentiation of neural stem/progenitor cells in the adult subventricular zone, possibly by positively regulating the expression of NEUROD1. The chain is DNA-binding protein SATB1 from Homo sapiens (Human).